The primary structure comprises 543 residues: Sensor histidine kinase DcuS (543 aa).

The Cytoplasmic portion of the chain corresponds to Met1–Thr20. A helical membrane pass occupies residues Val21–Phe41. Over Ser42 to Trp181 the chain is Periplasmic. (R)-malate-binding positions include Arg107–His110, Lys121, Gly140–Leu142, and Arg147. A helical transmembrane segment spans residues Ser182–Val202. Residues Asn203–Arg543 are Cytoplasmic-facing. A PAS domain is found at Leu212–Asp323. Residues Glu346–Gly538 form the Histidine kinase domain. His349 carries the post-translational modification Phosphohistidine; by autocatalysis.

Homodimer. Post-translationally, autophosphorylated. The phosphoryl group is rapidly transferred to DcuR.

The protein resides in the cell inner membrane. It carries out the reaction ATP + protein L-histidine = ADP + protein N-phospho-L-histidine.. Its function is as follows. Member of the two-component regulatory system DcuR/DcuS. Involved in the C4-dicarboxylate-stimulated regulation of the genes encoding the anaerobic fumarate respiratory system (frdABCD; nuoAN; dcuB; sdhCDAB; etc.). Weakly regulates the aerobic C4-dicarboxylate transporter dctA. Activates DcuR by phosphorylation. The protein is Sensor histidine kinase DcuS (dcuS) of Escherichia coli O6:H1 (strain CFT073 / ATCC 700928 / UPEC).